Here is a 428-residue protein sequence, read N- to C-terminus: Tryptophan synthase beta chain (428 aa).

At lysine 100 the chain carries N6-(pyridoxal phosphate)lysine.

Belongs to the TrpB family. As to quaternary structure, tetramer of two alpha and two beta chains. Pyridoxal 5'-phosphate is required as a cofactor.

The catalysed reaction is (1S,2R)-1-C-(indol-3-yl)glycerol 3-phosphate + L-serine = D-glyceraldehyde 3-phosphate + L-tryptophan + H2O. It participates in amino-acid biosynthesis; L-tryptophan biosynthesis; L-tryptophan from chorismate: step 5/5. In terms of biological role, the beta subunit is responsible for the synthesis of L-tryptophan from indole and L-serine. This chain is Tryptophan synthase beta chain, found in Streptomyces griseus subsp. griseus (strain JCM 4626 / CBS 651.72 / NBRC 13350 / KCC S-0626 / ISP 5235).